A 535-amino-acid chain; its full sequence is UDP-glucuronosyltransferase 1A1 (535 aa).

An N-terminal signal peptide occupies residues 1–29 (MSVVCRSSCSLLLLPCLLLCVLGPSASHA). Asparagine 89, asparagine 297, and asparagine 435 each carry an N-linked (GlcNAc...) asparagine glycan. The chain crosses the membrane as a helical span at residues 493–509 (VIGFLLAIVLTVVFIVY).

This sequence belongs to the UDP-glycosyltransferase family. Homodimers. Homooligomer. Interacts with UGT1A3, UGT1A4, UGT1A6, UGT1A7, UGT1A8, UGT1A9 and UGT1A10 to form heterodimers.

The protein localises to the endoplasmic reticulum membrane. It catalyses the reaction glucuronate acceptor + UDP-alpha-D-glucuronate = acceptor beta-D-glucuronoside + UDP + H(+). The catalysed reaction is 17beta-estradiol + UDP-alpha-D-glucuronate = 17beta-estradiol 3-O-(beta-D-glucuronate) + UDP + H(+). It carries out the reaction 2-hydroxyestrone + UDP-alpha-D-glucuronate = 2-hydroxyestrone 3-O-(beta-D-glucuronate) + UDP + H(+). The enzyme catalyses 2-hydroxy-17beta-estradiol + UDP-alpha-D-glucuronate = 2-hydroxy-17beta-estradiol 3-O-(beta-D-glucuronate) + UDP + H(+). It catalyses the reaction 2-methoxy-17beta-estradiol + UDP-alpha-D-glucuronate = 2-methoxy-17beta-estradiol 3-O-(beta-D-glucuronate) + UDP + H(+). The catalysed reaction is 17alpha-estradiol + UDP-alpha-D-glucuronate = 17alpha-estradiol 3-O-(beta-D-glucuronate) + UDP + H(+). It carries out the reaction 16beta,17beta-estriol + UDP-alpha-D-glucuronate = 16beta,17beta-estriol 16-O-(beta-D-glucuronate) + UDP + H(+). The enzyme catalyses losartan + UDP-alpha-D-glucuronate = losartan-2-N-beta-D-glucuronide + UDP. It catalyses the reaction prunetin + UDP-alpha-D-glucuronate = prunetin-4'-O-beta-D-glucuronide + UDP. The catalysed reaction is SN-38 + UDP-alpha-D-glucuronate = SN-38 O-beta-D-glucuronide + UDP + H(+). It carries out the reaction (4Z,15Z)-bilirubin IXalpha + UDP-alpha-D-glucuronate = (4Z,15Z)-bilirubin IXalpha C12-beta-D-glucuronoside + UDP. The enzyme catalyses (4Z,15Z)-bilirubin IXalpha + UDP-alpha-D-glucuronate = (4Z,15Z)-bilirubin IXalpha C8-beta-D-glucuronoside + UDP. It catalyses the reaction (4Z,15Z)-bilirubin IXalpha C8-beta-D-glucuronoside + UDP-alpha-D-glucuronate = (4Z,15Z)-bilirubin IXalpha C8,C12-beta-D-bisglucuronoside + UDP. The catalysed reaction is (4Z,15Z)-bilirubin IXalpha C12-beta-D-glucuronoside + UDP-alpha-D-glucuronate = (4Z,15Z)-bilirubin IXalpha C8,C12-beta-D-bisglucuronoside + UDP. It carries out the reaction 8-iso-prostaglandin F2alpha + UDP-alpha-D-glucuronate = 8-iso-prostaglandin F2alpha-glucuronide + UDP + H(+). The enzyme catalyses (5Z,8Z,11Z,14Z)-eicosatetraenoate + UDP-alpha-D-glucuronate = O-[(5Z),(8Z),(11Z),(14Z)-eicosatetraenoyl]-beta-D-glucuronate + UDP. It catalyses the reaction 15-hydroxy-(5Z,8Z,11Z,13E)-eicosatetraenoate + UDP-alpha-D-glucuronate = 15-O-(beta-D-glucuronosyl)-(5Z,8Z,11Z,14Z)-eicosatetraenoate + UDP + H(+). The catalysed reaction is 20-hydroxy-(5Z,8Z,11Z,14Z)-eicosatetraenoate + UDP-alpha-D-glucuronate = 20-O-(beta-D-glucuronosyl)-(5Z,8Z,11Z,14Z)-eicosatetraenoate + UDP + H(+). It carries out the reaction prostaglandin B1 + UDP-alpha-D-glucuronate = 15-O-(beta-D-glucuronosyl)-prostaglandin B1 + UDP + H(+). The enzyme catalyses (E)-ferulate + UDP-alpha-D-glucuronate = (E)-4-O-(beta-D-glucuronosyl)-ferulate + UDP + H(+). It catalyses the reaction (E)-ferulate + UDP-alpha-D-glucuronate = (E)-ferulic acid beta-D-glucuronate ester + UDP. Its function is as follows. UDP-glucuronosyltransferase (UGT) that catalyzes phase II biotransformation reactions in which lipophilic substrates are conjugated with glucuronic acid to increase the metabolite's water solubility, thereby facilitating excretion into either the urine or bile. Essential for the elimination and detoxification of drugs, xenobiotics and endogenous compounds. Catalyzes the glucuronidation of endogenous estrogen hormones such as estradiol, estrone and estriol. Involved in the glucuronidation of bilirubin, a degradation product occurring in the normal catabolic pathway that breaks down heme in vertebrates. Involved in the glucuronidation of arachidonic acid (AA) and AA-derived eicosanoids including 15-HETE, 20-HETE, PGB1 and F2-isoprostane (8-iso-PGF2alpha). Involved in the glucuronidation of the phytochemical ferulic acid at the phenolic or the carboxylic acid group. Also catalyzes the glucuronidation the isoflavones genistein, daidzein, glycitein, formononetin, biochanin A and prunetin, which are phytoestrogens with anticancer and cardiovascular properties. Involved in the glucuronidation of the AGTR1 angiotensin receptor antagonist losartan, a drug which can inhibit the effect of angiotensin II. Involved in the biotransformation of 7-ethyl-10-hydroxycamptothecin (SN-38), the pharmacologically active metabolite of the anticancer drug irinotecan. This chain is UDP-glucuronosyltransferase 1A1, found in Rattus norvegicus (Rat).